A 253-amino-acid polypeptide reads, in one-letter code: Small ribosomal subunit protein cS22 (253 aa).

A chloroplast-targeting transit peptide spans 1–56; the sequence is MATFLTNVVSIKPTIFSFQSESFTPLHTRVNVFSSKPFPSLAGTFSRSSRTRFIPY. RRM domains lie at 76–154 and 177–253; these read RRVY…ITEK and YKVY…VNKA.

This sequence belongs to the chloroplast-specific ribosomal protein cS22 family. As to quaternary structure, component of the chloroplast small ribosomal subunit (SSU). Mature 70S chloroplast ribosomes of higher plants consist of a small (30S) and a large (50S) subunit. The 30S small subunit contains 1 molecule of ribosomal RNA (16S rRNA) and 24 different proteins. The 50S large subunit contains 3 rRNA molecules (23S, 5S and 4.5S rRNA) and 33 different proteins. As to expression, expressed constitutively in roots, stems, flower buds, flowers and leaves.

It localises to the plastid. It is found in the chloroplast. Its function is as follows. Component of the chloroplast ribosome (chloro-ribosome), a dedicated translation machinery responsible for the synthesis of chloroplast genome-encoded proteins, including proteins of the transcription and translation machinery and components of the photosynthetic apparatus. May have a role in the recruitment of stored chloroplast mRNAs for active protein synthesis. Bind single strand DNA (ssDNA) and RNA in vitro. Exhibits RNA chaperone activity. Negatively regulates resistance responses to abiotic stresses during seed germination (e.g. salt, dehydration, and low temperature) and seedling growth (e.g. salt). The polypeptide is Small ribosomal subunit protein cS22 (Arabidopsis thaliana (Mouse-ear cress)).